The primary structure comprises 313 residues: GTP cyclohydrolase MptA (313 aa).

It belongs to the GTP cyclohydrolase IV family. Homodimer. The cofactor is Fe(2+).

It carries out the reaction GTP + H2O = 7,8-dihydroneopterin 2',3'-cyclic phosphate + formate + diphosphate + H(+). The protein operates within cofactor biosynthesis; 5,6,7,8-tetrahydromethanopterin biosynthesis. Converts GTP to 7,8-dihydro-D-neopterin 2',3'-cyclic phosphate, the first intermediate in the biosynthesis of coenzyme methanopterin. The protein is GTP cyclohydrolase MptA of Methanosphaera stadtmanae (strain ATCC 43021 / DSM 3091 / JCM 11832 / MCB-3).